Here is a 235-residue protein sequence, read N- to C-terminus: Transmembrane protein 215 (235 aa).

The next 2 membrane-spanning stretches (helical) occupy residues 12-32 and 40-60; these read LVVALVSVFLVFGFMFTVSGM and IPLLAIGPAICLPGIAAIALA. The interval 99 to 146 is disordered; the sequence is SDLESGKGSSDELAKKAGLRGKQLPQGPGEVPMASSVTTPTPTEEGEC.

The protein resides in the membrane. The chain is Transmembrane protein 215 (Tmem215) from Mus musculus (Mouse).